Reading from the N-terminus, the 172-residue chain is Thioredoxin Y1, chloroplastic (172 aa).

The transit peptide at 1-62 (MASISLSSST…SSTTRCTPRR (62 aa)) directs the protein to the chloroplast. The Thioredoxin domain occupies 63-169 (IEAKKQTFDS…LIQRIEDSLK (107 aa)). Catalysis depends on nucleophile residues Cys-93 and Cys-96. Cys-93 and Cys-96 form a disulfide bridge.

This sequence belongs to the thioredoxin family. Plant Y-type subfamily. In terms of tissue distribution, expressed in roots and seeds.

Its subcellular location is the plastid. It localises to the chloroplast stroma. Its function is as follows. Thiol-disulfide oxidoreductase that poorly activates chloroplastic malate dehydrogenase (NADP-MDH) and fructose-1,6-bisphosphatase. Provides reducing equivalents for peroxiredoxin Q. This is Thioredoxin Y1, chloroplastic from Arabidopsis thaliana (Mouse-ear cress).